Reading from the N-terminus, the 296-residue chain is ATP phosphoribosyltransferase (296 aa).

The protein belongs to the ATP phosphoribosyltransferase family.

Its subcellular location is the cytoplasm. It catalyses the reaction 1-(5-phospho-beta-D-ribosyl)-ATP + diphosphate = 5-phospho-alpha-D-ribose 1-diphosphate + ATP. It participates in amino-acid biosynthesis; L-histidine biosynthesis; L-histidine from 5-phospho-alpha-D-ribose 1-diphosphate: step 1/9. Functionally, catalyzes the condensation of ATP and 5-phosphoribose 1-diphosphate to form N'-(5'-phosphoribosyl)-ATP (PR-ATP). Has a crucial role in the pathway because the rate of histidine biosynthesis seems to be controlled primarily by regulation of the enzymatic activity. The polypeptide is ATP phosphoribosyltransferase (HIS1) (Yarrowia lipolytica (strain CLIB 122 / E 150) (Yeast)).